Here is a 973-residue protein sequence, read N- to C-terminus: 109 kDa U5 small nuclear ribonucleoprotein component GFL (973 aa).

The segment at Met1 to Gly40 is disordered. A compositionally biased stretch (acidic residues) spans Ile17–Gln33. In terms of domain architecture, tr-type G spans Ala122 to Tyr408. Residues Gly131–Thr138 are G1. Residue Gly131 to Thr138 participates in GTP binding. The tract at residues Asn175 to Lys179 is G2. Positions Asp201 to Gly204 are G3. Residues Asp201 to Asn205 and Asn255 to Asp258 each bind GTP. The interval Asn255 to Asp258 is G4. The interval Tyr381 to Gln383 is G5.

This sequence belongs to the TRAFAC class translation factor GTPase superfamily. Classic translation factor GTPase family. As to expression, expressed in flower buds, open flowers and siliques. Expressed at low levels in rosettes leaves, cauline leaves and stems.

It is found in the nucleus speckle. Functionally, splicing factor involved in pre-mRNA splicing and component of the spliceosome. This is 109 kDa U5 small nuclear ribonucleoprotein component GFL from Arabidopsis thaliana (Mouse-ear cress).